A 1357-amino-acid polypeptide reads, in one-letter code: DNA-directed RNA polymerase subunit beta (1357 aa).

The protein belongs to the RNA polymerase beta chain family. The RNAP catalytic core consists of 2 alpha, 1 beta, 1 beta' and 1 omega subunit. When a sigma factor is associated with the core the holoenzyme is formed, which can initiate transcription.

It carries out the reaction RNA(n) + a ribonucleoside 5'-triphosphate = RNA(n+1) + diphosphate. In terms of biological role, DNA-dependent RNA polymerase catalyzes the transcription of DNA into RNA using the four ribonucleoside triphosphates as substrates. The chain is DNA-directed RNA polymerase subunit beta from Pseudomonas putida (Arthrobacter siderocapsulatus).